Here is a 554-residue protein sequence, read N- to C-terminus: Rab GTPase-binding effector protein 2 (554 aa).

Disordered regions lie at residues 1-28 (MAAA…SELS), 167-208 (IQRR…GPAA), and 371-395 (GLRA…DEAL). The span at 14–28 (PQEKQKDASESSELS) shows a compositional bias: basic and acidic residues. Positions 15–173 (QEKQKDASES…IQEIQRRPRQ (159 aa)) form a coiled coil. A phosphoserine mark is found at Ser-176, Ser-180, Ser-187, and Ser-191. Residues 274-509 (DSQWEQLQVE…QAELETSEQV (236 aa)) are a coiled coil.

Belongs to the rabaptin family. As to quaternary structure, heterodimer with RABGEF1. The dimer binds RAB5A that has been activated by GTP-binding. Interacts with SDCCAG8; this interaction is important for ciliogenesis regulation. Interacts with RAB4A; this interaction may mediate VEGFR2 cell surface expression.

Its subcellular location is the cytoplasm. The protein localises to the early endosome. It localises to the cytoskeleton. The protein resides in the microtubule organizing center. It is found in the centrosome. Its subcellular location is the cilium basal body. Plays a role in membrane trafficking and in homotypic early endosome fusion. Participates in arteriogenesis by regulating vascular endothelial growth factor receptor 2/VEGFR2 cell surface expression and endosomal trafficking. By interacting with SDCCAG8, localizes to centrosomes and plays a critical role in ciliogenesis. In Mus musculus (Mouse), this protein is Rab GTPase-binding effector protein 2 (Rabep2).